We begin with the raw amino-acid sequence, 195 residues long: Large ribosomal subunit protein uL5 (195 aa).

Belongs to the universal ribosomal protein uL5 family. As to quaternary structure, part of the 50S ribosomal subunit; part of the 5S rRNA/L5/L18/L25 subcomplex. Contacts the 5S rRNA and the P site tRNA. Forms a bridge to the 30S subunit in the 70S ribosome.

This is one of the proteins that bind and probably mediate the attachment of the 5S RNA into the large ribosomal subunit, where it forms part of the central protuberance. In the 70S ribosome it contacts protein S13 of the 30S subunit (bridge B1b), connecting the 2 subunits; this bridge is implicated in subunit movement. Contacts the P site tRNA; the 5S rRNA and some of its associated proteins might help stabilize positioning of ribosome-bound tRNAs. The chain is Large ribosomal subunit protein uL5 from Chlorobium phaeobacteroides (strain DSM 266 / SMG 266 / 2430).